Here is a 445-residue protein sequence, read N- to C-terminus: Rab GDP dissociation inhibitor beta (445 aa).

M1 is modified (N-acetylmethionine). At K57 the chain carries N6-succinyllysine. Residue S61 is modified to Phosphoserine. Position 112 is an N6-acetyllysine (K112). S130 is modified (phosphoserine). Residue K269 is modified to N6-acetyllysine. Phosphoserine is present on S382.

This sequence belongs to the Rab GDI family. In terms of assembly, interacts with RHOH. Interacts with the GDP-bound inactive forms of RAB3A, RAB3B, RAB3C, RAB5A, RAB5B, RAB5C, RAB8A, RAB8B, RAB10, RAB12, RAB35, and RAB43; binds RAB3D to a lesser extent. Interacts with DZIP1; this interaction negatively regulates the interaction of GDI2 with GDP-bound RAB8A. As to expression, ubiquitous.

The protein resides in the cytoplasm. The protein localises to the membrane. Its subcellular location is the golgi apparatus. It is found in the trans-Golgi network. Its function is as follows. GDP-dissociation inhibitor preventing the GDP to GTP exchange of most Rab proteins. By keeping these small GTPases in their inactive GDP-bound form regulates intracellular membrane trafficking. Negatively regulates protein transport to the cilium and ciliogenesis through the inhibition of RAB8A. The protein is Rab GDP dissociation inhibitor beta (GDI2) of Homo sapiens (Human).